A 204-amino-acid polypeptide reads, in one-letter code: FMN-dependent NADH:quinone oxidoreductase (204 aa).

Residues Ser9, 15–17 (SVS), 95–98 (MYNF), and 139–142 (SRGG) contribute to the FMN site.

This sequence belongs to the azoreductase type 1 family. As to quaternary structure, homodimer. FMN serves as cofactor.

The enzyme catalyses 2 a quinone + NADH + H(+) = 2 a 1,4-benzosemiquinone + NAD(+). It catalyses the reaction N,N-dimethyl-1,4-phenylenediamine + anthranilate + 2 NAD(+) = 2-(4-dimethylaminophenyl)diazenylbenzoate + 2 NADH + 2 H(+). In terms of biological role, quinone reductase that provides resistance to thiol-specific stress caused by electrophilic quinones. Also exhibits azoreductase activity. Catalyzes the reductive cleavage of the azo bond in aromatic azo compounds to the corresponding amines. The chain is FMN-dependent NADH:quinone oxidoreductase from Methylocella silvestris (strain DSM 15510 / CIP 108128 / LMG 27833 / NCIMB 13906 / BL2).